The primary structure comprises 428 residues: GTPase Obg (428 aa).

The region spanning 1-158 is the Obg domain; sequence MFVDQVKIYV…RDVILELKVL (158 aa). Residues 159–329 enclose the OBG-type G domain; it reads ADVGLVGFPS…LLFEVANLIE (171 aa). Residues 165–172, 190–194, 212–215, 282–285, and 310–312 each bind GTP; these read GFPSVGKS, FTTIV, DLPG, NKMD, and SAV. Mg(2+)-binding residues include serine 172 and threonine 192. The OCT domain maps to 350–428; that stretch reads KFETEGVKFD…ILEYEFEFID (79 aa).

This sequence belongs to the TRAFAC class OBG-HflX-like GTPase superfamily. OBG GTPase family. Monomer. The cofactor is Mg(2+).

It localises to the cytoplasm. Its function is as follows. An essential GTPase which binds GTP, GDP and possibly (p)ppGpp with moderate affinity, with high nucleotide exchange rates and a fairly low GTP hydrolysis rate. Plays a role in control of the cell cycle, stress response, ribosome biogenesis and in those bacteria that undergo differentiation, in morphogenesis control. The protein is GTPase Obg of Bacillus thuringiensis (strain Al Hakam).